Here is a 51-residue protein sequence, read N- to C-terminus: Insulin (51 aa).

3 disulfide bridges follow: Cys-7–Cys-37, Cys-19–Cys-50, and Cys-36–Cys-41.

It belongs to the insulin family. As to quaternary structure, heterodimer of a B chain and an A chain linked by two disulfide bonds.

Its subcellular location is the secreted. Functionally, insulin decreases blood glucose concentration. It increases cell permeability to monosaccharides, amino acids and fatty acids. It accelerates glycolysis, the pentose phosphate cycle, and glycogen synthesis in liver. The protein is Insulin (INS) of Anser anser anser (Western greylag goose).